Reading from the N-terminus, the 102-residue chain is Nucleoid-associated protein WIGBR5260 (102 aa).

The protein belongs to the YbaB/EbfC family. Homodimer.

Its subcellular location is the cytoplasm. The protein localises to the nucleoid. In terms of biological role, binds to DNA and alters its conformation. May be involved in regulation of gene expression, nucleoid organization and DNA protection. This is Nucleoid-associated protein WIGBR5260 from Wigglesworthia glossinidia brevipalpis.